Here is a 208-residue protein sequence, read N- to C-terminus: Protein-L-isoaspartate O-methyltransferase (208 aa).

Residue serine 59 is part of the active site.

It belongs to the methyltransferase superfamily. L-isoaspartyl/D-aspartyl protein methyltransferase family.

It is found in the cytoplasm. The catalysed reaction is [protein]-L-isoaspartate + S-adenosyl-L-methionine = [protein]-L-isoaspartate alpha-methyl ester + S-adenosyl-L-homocysteine. Functionally, catalyzes the methyl esterification of L-isoaspartyl residues in peptides and proteins that result from spontaneous decomposition of normal L-aspartyl and L-asparaginyl residues. It plays a role in the repair and/or degradation of damaged proteins. This Escherichia coli O1:K1 / APEC protein is Protein-L-isoaspartate O-methyltransferase.